Consider the following 114-residue polypeptide: Nucleoid-associated protein MAE_23910 (114 aa).

This sequence belongs to the YbaB/EbfC family. Homodimer.

Its subcellular location is the cytoplasm. The protein resides in the nucleoid. Binds to DNA and alters its conformation. May be involved in regulation of gene expression, nucleoid organization and DNA protection. The sequence is that of Nucleoid-associated protein MAE_23910 from Microcystis aeruginosa (strain NIES-843 / IAM M-2473).